Here is a 203-residue protein sequence, read N- to C-terminus: Holliday junction branch migration complex subunit RuvA (203 aa).

Positions 1–61 (MIIYKYGKIM…EYTKVTYGFD (61 aa)) are domain I. The tract at residues 62 to 139 (NFKELVIFED…KFMKKLTSDE (78 aa)) is domain II. Residues 140-147 (AAKIKVPA) form a flexible linker region. The segment at 147–203 (ASSENENKFLDTMKMLGFKQQQIKFALDKIELNDDIETCVENAIKLISQQQHETSRV) is domain III.

It belongs to the RuvA family. Homotetramer. Forms an RuvA(8)-RuvB(12)-Holliday junction (HJ) complex. HJ DNA is sandwiched between 2 RuvA tetramers; dsDNA enters through RuvA and exits via RuvB. An RuvB hexamer assembles on each DNA strand where it exits the tetramer. Each RuvB hexamer is contacted by two RuvA subunits (via domain III) on 2 adjacent RuvB subunits; this complex drives branch migration. In the full resolvosome a probable DNA-RuvA(4)-RuvB(12)-RuvC(2) complex forms which resolves the HJ.

Its subcellular location is the cytoplasm. Functionally, the RuvA-RuvB-RuvC complex processes Holliday junction (HJ) DNA during genetic recombination and DNA repair, while the RuvA-RuvB complex plays an important role in the rescue of blocked DNA replication forks via replication fork reversal (RFR). RuvA specifically binds to HJ cruciform DNA, conferring on it an open structure. The RuvB hexamer acts as an ATP-dependent pump, pulling dsDNA into and through the RuvAB complex. HJ branch migration allows RuvC to scan DNA until it finds its consensus sequence, where it cleaves and resolves the cruciform DNA. The chain is Holliday junction branch migration complex subunit RuvA from Metamycoplasma arthritidis (strain 158L3-1) (Mycoplasma arthritidis).